A 370-amino-acid chain; its full sequence is Dual-specificity RNA methyltransferase RlmN (370 aa).

Catalysis depends on Glu-93, which acts as the Proton acceptor. A Radical SAM core domain is found at 99–337 (AEGRGTLCVS…VTTVRKTRGD (239 aa)). A disulfide bridge connects residues Cys-106 and Cys-343. Residues Cys-113, Cys-117, and Cys-120 each coordinate [4Fe-4S] cluster. S-adenosyl-L-methionine is bound by residues 167 to 168 (GE), Ser-199, 221 to 223 (SLH), and Asn-300. The S-methylcysteine intermediate role is filled by Cys-343.

Belongs to the radical SAM superfamily. RlmN family. Requires [4Fe-4S] cluster as cofactor.

It is found in the cytoplasm. It carries out the reaction adenosine(2503) in 23S rRNA + 2 reduced [2Fe-2S]-[ferredoxin] + 2 S-adenosyl-L-methionine = 2-methyladenosine(2503) in 23S rRNA + 5'-deoxyadenosine + L-methionine + 2 oxidized [2Fe-2S]-[ferredoxin] + S-adenosyl-L-homocysteine. The catalysed reaction is adenosine(37) in tRNA + 2 reduced [2Fe-2S]-[ferredoxin] + 2 S-adenosyl-L-methionine = 2-methyladenosine(37) in tRNA + 5'-deoxyadenosine + L-methionine + 2 oxidized [2Fe-2S]-[ferredoxin] + S-adenosyl-L-homocysteine. Functionally, specifically methylates position 2 of adenine 2503 in 23S rRNA and position 2 of adenine 37 in tRNAs. m2A2503 modification seems to play a crucial role in the proofreading step occurring at the peptidyl transferase center and thus would serve to optimize ribosomal fidelity. The polypeptide is Dual-specificity RNA methyltransferase RlmN (Francisella tularensis subsp. tularensis (strain FSC 198)).